The following is a 249-amino-acid chain: Low affinity immunoglobulin gamma Fc region receptor III-A (249 aa).

The first 16 residues, 1–16, serve as a signal peptide directing secretion; the sequence is MWQLLPSTALLLVASA. The Extracellular portion of the chain corresponds to 17-198; that stretch reads RPQAADLPKA…IQGPPVPSTS (182 aa). Ig-like C2-type domains lie at 24–104 and 119–172; these read PKAV…LEVH and EGEP…YFCR. Cystine bridges form between C47–C88 and C127–C171. N55, N63, N166, and N179 each carry an N-linked (GlcNAc...) asparagine glycan. Residues 199 to 219 form a helical membrane-spanning segment; that stretch reads ALLPFWPHIPFAVVMALLFAV. The Cytoplasmic segment spans residues 220-249; that stretch reads DTGLYFAMQRHLHNSKRAWENSKVSWKQDP.

Forms a heterooligomeric complex with ITAM-containing signaling subunits FCER1G. Interacts (via transmembrane domain) with signaling subunits; this interaction is a prerequisite for receptor complex expression on the cell surface and intracellular signal transduction. Binds the Fc region of antigen-complexed IgG.

The protein localises to the cell membrane. In terms of biological role, receptor for the invariable Fc fragment of immunoglobulin gamma (IgG). Optimally activated upon binding of clustered antigen-IgG complexes displayed on cell surfaces, triggers lysis of antibody-coated cells, a process known as antibody-dependent cellular cytotoxicity (ADCC). Does not bind free monomeric IgG, thus avoiding inappropriate effector cell activation in the absence of antigenic trigger. Mediates IgG effector functions on natural killer (NK) cells. Binds antigen-IgG complexes generated upon infection and triggers NK cell-dependent cytokine production and degranulation to limit viral load and propagation. Fc-binding subunit that associates with FCER1G adapter to form functional signaling complexes. Following the engagement of antigen-IgG complexes, triggers phosphorylation of immunoreceptor tyrosine-based activation motif (ITAM)-containing adapter with subsequent activation of phosphatidylinositol 3-kinase signaling and sustained elevation of intracellular calcium that ultimately drive NK cell activation. Mediates enhanced ADCC in response to afucosylated IgGs. In Mustela putorius furo (European domestic ferret), this protein is Low affinity immunoglobulin gamma Fc region receptor III-A.